Reading from the N-terminus, the 272-residue chain is Diaminopimelate epimerase (272 aa).

Positions 11 and 63 each coordinate substrate. Residue Cys-72 is the Proton donor of the active site. Substrate contacts are provided by residues 73–74 (GN), Asn-190, and 208–209 (ER). The Proton acceptor role is filled by Cys-217. 218–219 (GT) contacts substrate.

This sequence belongs to the diaminopimelate epimerase family. In terms of assembly, homodimer.

The protein localises to the cytoplasm. It catalyses the reaction (2S,6S)-2,6-diaminopimelate = meso-2,6-diaminopimelate. The protein operates within amino-acid biosynthesis; L-lysine biosynthesis via DAP pathway; DL-2,6-diaminopimelate from LL-2,6-diaminopimelate: step 1/1. Catalyzes the stereoinversion of LL-2,6-diaminopimelate (L,L-DAP) to meso-diaminopimelate (meso-DAP), a precursor of L-lysine and an essential component of the bacterial peptidoglycan. This chain is Diaminopimelate epimerase, found in Clostridium perfringens (strain 13 / Type A).